A 158-amino-acid polypeptide reads, in one-letter code: MGVEGILERGYVTTSADKLINWARTGSLWPMTFGLACCAVEMMHTAAGRYDMDRNGLIFRPSPRQSDVMIVAGTLCNKMAPALRKVYDQMPEPKWVISMGSCANGGGYYHYSYSVTRGCDRIVPVDIYVPGCPPTAEALYYGILQLQNKIRRTNTIAR.

[4Fe-4S] cluster contacts are provided by C37, C38, C102, and C132.

It belongs to the complex I 20 kDa subunit family. As to quaternary structure, NDH-1 is composed of 14 different subunits. Subunits NuoB, C, D, E, F, and G constitute the peripheral sector of the complex. Requires [4Fe-4S] cluster as cofactor.

The protein localises to the cell inner membrane. The catalysed reaction is a quinone + NADH + 5 H(+)(in) = a quinol + NAD(+) + 4 H(+)(out). Its function is as follows. NDH-1 shuttles electrons from NADH, via FMN and iron-sulfur (Fe-S) centers, to quinones in the respiratory chain. The immediate electron acceptor for the enzyme in this species is believed to be ubiquinone. Couples the redox reaction to proton translocation (for every two electrons transferred, four hydrogen ions are translocated across the cytoplasmic membrane), and thus conserves the redox energy in a proton gradient. The protein is NADH-quinone oxidoreductase subunit B of Halorhodospira halophila (strain DSM 244 / SL1) (Ectothiorhodospira halophila (strain DSM 244 / SL1)).